A 102-amino-acid polypeptide reads, in one-letter code: UPF0147 protein MTH_1407 (102 aa).

It belongs to the UPF0147 family.

The chain is UPF0147 protein MTH_1407 from Methanothermobacter thermautotrophicus (strain ATCC 29096 / DSM 1053 / JCM 10044 / NBRC 100330 / Delta H) (Methanobacterium thermoautotrophicum).